Reading from the N-terminus, the 651-residue chain is L-type lectin-domain containing receptor kinase IX.1 (651 aa).

The N-terminal stretch at methionine 1 to serine 19 is a signal peptide. Residues valine 20–serine 251 form a legume-lectin like region. Over valine 20–methionine 269 the chain is Extracellular. N-linked (GlcNAc...) asparagine glycosylation is found at asparagine 23, asparagine 125, asparagine 129, asparagine 162, asparagine 169, asparagine 174, asparagine 195, and asparagine 211. A helical membrane pass occupies residues isoleucine 270–valine 290. The Cytoplasmic portion of the chain corresponds to phenylalanine 291–arginine 651. Positions phenylalanine 335–leucine 616 constitute a Protein kinase domain. ATP contacts are provided by residues leucine 341–valine 349 and lysine 364. The active-site Proton acceptor is aspartate 459. Residues serine 630 to arginine 651 form a disordered region.

It in the C-terminal section; belongs to the protein kinase superfamily. Ser/Thr protein kinase family. This sequence in the N-terminal section; belongs to the leguminous lectin family. Interacts with ABCG40.

The protein localises to the cell membrane. It carries out the reaction L-seryl-[protein] + ATP = O-phospho-L-seryl-[protein] + ADP + H(+). The enzyme catalyses L-threonyl-[protein] + ATP = O-phospho-L-threonyl-[protein] + ADP + H(+). Functionally, promotes hydrogen peroxide H(2)O(2) production and cell death. Involved in resistance response to the pathogenic oomycetes Phytophthora infestans and Phytophthora capsici. The protein is L-type lectin-domain containing receptor kinase IX.1 of Arabidopsis thaliana (Mouse-ear cress).